A 112-amino-acid chain; its full sequence is Protein SMALL AUXIN UP-REGULATED RNA 10 (112 aa).

The protein belongs to the ARG7 family. As to expression, confined to the veins and petioles of rosette leaves and cauline leaves, and specifically expressed at the abaxial side of inflorescence branche; relocates to both the adaxial (Ad) and abaxial (Ab) sides of the branch in reduced red:far-red (R:FR) light, during shade. Also present in flowers.

The protein localises to the cell membrane. In terms of biological role, provide a mechanistic link between auxin and plasma membrane H(+)-ATPases (PM H(+)-ATPases, e.g. AHA1 and AHA2), and triggers PM H(+)-ATPases activity by promoting phosphorylation of their C-terminal autoinhibitory domain as a result of PP2C-D subfamily of type 2C phosphatases inhibition, thus leading to the acidification of the apoplast and the facilitation of solutes and water uptake to drive cell expansion. Triggers plant growth probably by promoting cell elongation. Regulates branch angles and bending. This chain is Protein SMALL AUXIN UP-REGULATED RNA 10, found in Arabidopsis thaliana (Mouse-ear cress).